The primary structure comprises 246 residues: Proteasome subunit alpha (246 aa).

It belongs to the peptidase T1A family. In terms of assembly, the 20S proteasome core is composed of 14 alpha and 14 beta subunits that assemble into four stacked heptameric rings, resulting in a barrel-shaped structure. The two inner rings, each composed of seven catalytic beta subunits, are sandwiched by two outer rings, each composed of seven alpha subunits. The catalytic chamber with the active sites is on the inside of the barrel. Has a gated structure, the ends of the cylinder being occluded by the N-termini of the alpha-subunits. Is capped by the proteasome-associated ATPase, ARC. Can also interact with the bacterial proteasome activator Bpa through the C-terminal hydrophobic-tyrosine-X motif (HbYX motif) of Bpa; Bpa forms a homooligomeric ring-like structure which stacks co-axially with the proteasomal alpha-rings. Pupylated at an undetermined lysine residue by the prokaryotic ubiquitin-like protein Pup with the help of the ligase PafA, which leads to its degradation by the proteasome and thereby constitutes a negative auto-regulation.

It localises to the cytoplasm. It participates in protein degradation; proteasomal Pup-dependent pathway. Its activity is regulated as follows. The formation of the proteasomal ATPase ARC-20S proteasome complex, likely via the docking of the C-termini of ARC into the intersubunit pockets in the alpha-rings, may trigger opening of the gate for substrate entry. Interconversion between the open-gate and close-gate conformations leads to a dynamic regulation of the 20S proteasome proteolysis activity. PPS auto-regulates its own activity via pupylation and degradation of its components. Peptidolytic activity is inhibited by N-acetyl-Leu-Leu-norleucinal (Ac-LLnL) in vitro. Its function is as follows. Component of the proteasome core, a large protease complex with broad specificity involved in protein degradation. The M.smegmatis proteasome is able to cleave oligopeptides after hydrophobic residues, thus displaying chymotrypsin-like activity. In complex with the ATPase Mpa, degrades protein targets conjugated to a prokaryotic ubiquitin-like protein (Pup). Identified substrates of the M.smegmatis proteasome are the pupylated SodA and Ino1 proteins. The Pup-proteasome system (PPS) is essential for survival under starvation; PPS likely functions to recycle amino acids under nitrogen starvation, thereby enabling the cell to maintain basal metabolic activities. The chain is Proteasome subunit alpha from Mycolicibacterium smegmatis (strain ATCC 700084 / mc(2)155) (Mycobacterium smegmatis).